Here is a 548-residue protein sequence, read N- to C-terminus: Mercuric reductase (548 aa).

One can recognise an HMA domain in the interval 1–65 (MTEITVNGMT…AIAALGYQGS (65 aa)). Residues C11 and C14 each coordinate a metal cation. 3 residues coordinate FAD: A97, G117, and T122. An intrachain disulfide couples C123 to C128. FAD contacts are provided by K132, A198, D390, and V398. 2 residues coordinate Hg(2+): C545 and C546.

The protein belongs to the class-I pyridine nucleotide-disulfide oxidoreductase family. Homodimer. FAD is required as a cofactor.

It catalyses the reaction Hg + NADP(+) + H(+) = Hg(2+) + NADPH. In terms of biological role, resistance to Hg(2+) in bacteria appears to be governed by a specialized system which includes mercuric reductase. MerA protein is responsible for volatilizing mercury as Hg(0). This Pseudomonas fluorescens protein is Mercuric reductase (merA).